A 214-amino-acid polypeptide reads, in one-letter code: Cell division protein SepF (214 aa).

The interval 24 to 120 is disordered; that stretch reads DNYEEYEERK…NTRRAQESTA (97 aa). Residues 30–40 are compositionally biased toward basic and acidic residues; sequence EERKAVNEPPR. A compositionally biased stretch (polar residues) spans 55 to 67; sequence ESYSQPAYTQQSE. The segment covering 69–98 has biased composition (basic and acidic residues); it reads VVEKPSARYRSAEAHQERDTQQAAYTEKKV. Positions 101–120 are enriched in polar residues; it reads MRSSNQSATTNTRRAQESTA.

Belongs to the SepF family. In terms of assembly, homodimer. Interacts with FtsZ.

The protein localises to the cytoplasm. Cell division protein that is part of the divisome complex and is recruited early to the Z-ring. Probably stimulates Z-ring formation, perhaps through the cross-linking of FtsZ protofilaments. Its function overlaps with FtsA. The chain is Cell division protein SepF from Enterococcus faecalis (strain ATCC 700802 / V583).